The following is a 29-amino-acid chain: Glucagon (29 aa).

This sequence belongs to the glucagon family.

The protein localises to the secreted. Functionally, promotes hydrolysis of glycogen and lipids, and raises the blood sugar level. This is Glucagon (gcg) from Torpedo marmorata (Marbled electric ray).